A 171-amino-acid polypeptide reads, in one-letter code: Ribosome maturation factor RimM (171 aa).

Positions Glu-97–Leu-170 constitute a PRC barrel domain.

It belongs to the RimM family. Binds ribosomal protein uS19.

It localises to the cytoplasm. In terms of biological role, an accessory protein needed during the final step in the assembly of 30S ribosomal subunit, possibly for assembly of the head region. Essential for efficient processing of 16S rRNA. May be needed both before and after RbfA during the maturation of 16S rRNA. It has affinity for free ribosomal 30S subunits but not for 70S ribosomes. The sequence is that of Ribosome maturation factor RimM from Bacillus cereus (strain ATCC 14579 / DSM 31 / CCUG 7414 / JCM 2152 / NBRC 15305 / NCIMB 9373 / NCTC 2599 / NRRL B-3711).